Here is a 253-residue protein sequence, read N- to C-terminus: 5-oxoprolinase subunit A (253 aa).

It belongs to the LamB/PxpA family. Forms a complex composed of PxpA, PxpB and PxpC.

It catalyses the reaction 5-oxo-L-proline + ATP + 2 H2O = L-glutamate + ADP + phosphate + H(+). Its function is as follows. Catalyzes the cleavage of 5-oxoproline to form L-glutamate coupled to the hydrolysis of ATP to ADP and inorganic phosphate. This Bacillus cereus (strain Q1) protein is 5-oxoprolinase subunit A.